Here is a 149-residue protein sequence, read N- to C-terminus: Transcriptional repressor NrdR (149 aa).

Residues C3 to C34 fold into a zinc finger. The 91-residue stretch at P49 to E139 folds into the ATP-cone domain.

It belongs to the NrdR family. Requires Zn(2+) as cofactor.

Negatively regulates transcription of bacterial ribonucleotide reductase nrd genes and operons by binding to NrdR-boxes. The protein is Transcriptional repressor NrdR of Actinobacillus pleuropneumoniae serotype 5b (strain L20).